The sequence spans 108 residues: ATP synthase epsilon chain (108 aa).

The protein belongs to the ATPase epsilon chain family. As to quaternary structure, F-type ATPases have 2 components, CF(1) - the catalytic core - and CF(0) - the membrane proton channel. CF(1) has five subunits: alpha(3), beta(3), gamma(1), delta(1), epsilon(1). CF(0) has three main subunits: a, b and c.

The protein localises to the cell inner membrane. Its function is as follows. Produces ATP from ADP in the presence of a proton gradient across the membrane. This is ATP synthase epsilon chain from Rickettsia bellii (strain OSU 85-389).